A 359-amino-acid polypeptide reads, in one-letter code: MAISTLKTGRIAIIGASGYGGLQLVKLINEHPDFEISTLNGERSVGKNWNEINPFMKILGDKKITKSNIDEIALDSDYAILSLPNGLSSQLTPLLLKKGVKVLDLSADYRFKSLDKWKEVYTKEAAKYKRYDYDLCEEAIYGFSEEFSSEISKSRLIACPGCYPTASLSLLIPFLKQGLIESEGIIIDAKSGTSGGGRNPSEQLLLSECSESIRPYGVIGHRHTAEIESIASHFAGHQVNLQFTPHLVPMVRGILSTVYARLRDPGLTAEDCKIVIEAFYKDQPFIDILPVGTYPATKWVKNTNKVMISVEVDKRNGRIVLMSVIDNLLKGQAGQAIQNLNIMHGLESDIGLPKITFYP.

The active site involves Cys162.

Belongs to the NAGSA dehydrogenase family. Type 1 subfamily.

The protein localises to the cytoplasm. It carries out the reaction N-acetyl-L-glutamate 5-semialdehyde + phosphate + NADP(+) = N-acetyl-L-glutamyl 5-phosphate + NADPH + H(+). The protein operates within amino-acid biosynthesis; L-arginine biosynthesis; N(2)-acetyl-L-ornithine from L-glutamate: step 3/4. In terms of biological role, catalyzes the NADPH-dependent reduction of N-acetyl-5-glutamyl phosphate to yield N-acetyl-L-glutamate 5-semialdehyde. This Prochlorococcus marinus (strain NATL2A) protein is N-acetyl-gamma-glutamyl-phosphate reductase.